The chain runs to 432 residues: Putative D-alanyl-D-alanine carboxypeptidase (432 aa).

A helical; Signal-anchor membrane pass occupies residues 7 to 25 (ATVLLTFSLSAFAVEYPVL).

It belongs to the peptidase S12 family. YfeW subfamily.

It is found in the cell inner membrane. The enzyme catalyses Preferential cleavage: (Ac)2-L-Lys-D-Ala-|-D-Ala. Also transpeptidation of peptidyl-alanyl moieties that are N-acyl substituents of D-alanine.. The protein is Putative D-alanyl-D-alanine carboxypeptidase of Salmonella enteritidis PT4 (strain P125109).